The sequence spans 734 residues: Photosystem I P700 chlorophyll a apoprotein A2 (734 aa).

Transmembrane regions (helical) follow at residues 46–69 (IFASHFGQLAIIFLWTSGNLFHVA), 135–158 (LYTGALFLLFLSAISLIGGWLHLQ), 175–199 (LNHHLSGLFGVSSLAWTGHLVHVAI), 273–291 (MAHHHLAIAFIFLIAGHMY), 330–353 (LHFQLGLALACLGVITSLVAQHMY), 369–395 (AASYTHHQYIAGFIMTGAFAHGAIFFI), 417–439 (AIISHLSWASLFLGFHTLGLYVH), and 517–535 (FLVHHAIALGLHTTTLILV). The [4Fe-4S] cluster site is built by cysteine 559 and cysteine 568. The next 2 helical transmembrane spans lie at 575–596 (AFYLAVFWMLNTIGWVTFYWHW) and 643–665 (LSVWAWMFLFGHLVWATGFMFLI). Residues histidine 654, methionine 662, and tyrosine 670 each coordinate chlorophyll a. Phylloquinone is bound at residue tryptophan 671. Residues 707–727 (LVGLAHFSVGYIFTYAAFLIA) form a helical membrane-spanning segment.

This sequence belongs to the PsaA/PsaB family. In terms of assembly, the PsaA/B heterodimer binds the P700 chlorophyll special pair and subsequent electron acceptors. PSI consists of a core antenna complex that captures photons, and an electron transfer chain that converts photonic excitation into a charge separation. The eukaryotic PSI reaction center is composed of at least 11 subunits. Requires P700 is a chlorophyll a/chlorophyll a' dimer, A0 is one or more chlorophyll a, A1 is one or both phylloquinones and FX is a shared 4Fe-4S iron-sulfur center. as cofactor.

It is found in the plastid. The protein resides in the chloroplast thylakoid membrane. It carries out the reaction reduced [plastocyanin] + hnu + oxidized [2Fe-2S]-[ferredoxin] = oxidized [plastocyanin] + reduced [2Fe-2S]-[ferredoxin]. In terms of biological role, psaA and PsaB bind P700, the primary electron donor of photosystem I (PSI), as well as the electron acceptors A0, A1 and FX. PSI is a plastocyanin-ferredoxin oxidoreductase, converting photonic excitation into a charge separation, which transfers an electron from the donor P700 chlorophyll pair to the spectroscopically characterized acceptors A0, A1, FX, FA and FB in turn. Oxidized P700 is reduced on the lumenal side of the thylakoid membrane by plastocyanin. The sequence is that of Photosystem I P700 chlorophyll a apoprotein A2 from Acorus calamus (Sweet flag).